The following is a 365-amino-acid chain: Aminomethyltransferase (365 aa).

This sequence belongs to the GcvT family. In terms of assembly, the glycine cleavage system is composed of four proteins: P, T, L and H.

The enzyme catalyses N(6)-[(R)-S(8)-aminomethyldihydrolipoyl]-L-lysyl-[protein] + (6S)-5,6,7,8-tetrahydrofolate = N(6)-[(R)-dihydrolipoyl]-L-lysyl-[protein] + (6R)-5,10-methylene-5,6,7,8-tetrahydrofolate + NH4(+). The glycine cleavage system catalyzes the degradation of glycine. This Cronobacter sakazakii (strain ATCC BAA-894) (Enterobacter sakazakii) protein is Aminomethyltransferase.